The following is a 938-amino-acid chain: TFIIH basal transcription factor complex helicase/translocase XPB subunit (938 aa).

In terms of domain architecture, Helicase ATP-binding spans 394–562 (FRSGNKAHQG…DLRHLVGPKL (169 aa)). 407-414 (LPCGAGKT) lines the ATP pocket. The short motif at 515 to 518 (DEVH) is the DEVH box element. The Helicase C-terminal domain maps to 627-781 (WCTQALLEFH…SYRVLQSDMV (155 aa)).

It belongs to the helicase family. RAD25/XPB subfamily. In terms of assembly, component of the 7-subunit TFIIH core complex composed of XPB, XPD, SSL1, TFB1, TFB2, TFB4 and TFB5.

It carries out the reaction Couples ATP hydrolysis with the unwinding of duplex DNA by translocating in the 3'-5' direction.. The enzyme catalyses ATP + H2O = ADP + phosphate + H(+). In terms of biological role, ATP-dependent 3'-5' DNA helicase/translocase; binds dsDNA rather than ssDNA, unzipping it in a translocase rather than classical helicase activity. Component of the general transcription factor IIH (TFIIH) core complex, involved in spliced leader RNA (SL RNA) gene transcription by RNA polymerase II. TFIIH has an essential role in transcription initiation. When the pre-initiation complex (PIC) has been established, TFIIH is required for promoter opening and promoter escape. The ATPase activity of XPB is required for promoter opening and promoter escape. In Trypanosoma brucei brucei (strain 927/4 GUTat10.1), this protein is TFIIH basal transcription factor complex helicase/translocase XPB subunit.